Here is a 192-residue protein sequence, read N- to C-terminus: Der GTPase-activating protein YihI (192 aa).

A disordered region spans residues 1–80 (MSRTKKTRRI…KAAVKEVKDP (80 aa)). Basic and acidic residues-rich tracts occupy residues 9–25 (RITDIMPARKADKKPEQ), 37–48 (TRYELDAKAREE), and 65–80 (DPAEQKKAAVKEVKDP).

Belongs to the YihI family. As to quaternary structure, interacts with Der.

Functionally, a GTPase-activating protein (GAP) that modifies Der/EngA GTPase function. May play a role in ribosome biogenesis. In Actinobacillus pleuropneumoniae serotype 5b (strain L20), this protein is Der GTPase-activating protein YihI.